The primary structure comprises 385 residues: Methionine aminopeptidase 1 (385 aa).

The segment at 6-59 adopts a C6H2-type zinc-finger fold; the sequence is SRVCETEGCSSEAKLQCPTCIKLGIQGSYFCSQECFKGSWATHKLLHKKAKDDK. Positions 9, 14, 22, 25, 36, 40, 48, and 52 each coordinate Zn(2+). His-203 serves as a coordination point for a protein. Zn(2+) is bound by residues Asp-220, Asp-231, and His-294. His-301 contacts a protein. Glu-327 and Glu-358 together coordinate Zn(2+).

This sequence belongs to the peptidase M24A family. Methionine aminopeptidase type 1 subfamily. As to quaternary structure, associates with the 60S ribosomal subunit of the 80S translational complex. The cofactor is Zn(2+). Co(2+) is required as a cofactor. Mn(2+) serves as cofactor. Requires Fe(2+) as cofactor.

It localises to the cytoplasm. It carries out the reaction Release of N-terminal amino acids, preferentially methionine, from peptides and arylamides.. In terms of biological role, cotranslationally removes the N-terminal methionine from nascent proteins. The N-terminal methionine is often cleaved when the second residue in the primary sequence is small and uncharged (Met-Ala-, Cys, Gly, Pro, Ser, Thr, or Val). This chain is Methionine aminopeptidase 1 (metap1), found in Xenopus laevis (African clawed frog).